Consider the following 541-residue polypeptide: Membrane protein insertase YidC (541 aa).

Transmembrane regions (helical) follow at residues 6–26 (NILL…WQAD), 349–369 (FVGN…GLLF), 420–440 (GGCL…WVLL), 457–477 (LSVQ…MFVM), and 500–520 (MIFT…WLVG).

It belongs to the OXA1/ALB3/YidC family. Type 1 subfamily. In terms of assembly, interacts with the Sec translocase complex via SecD. Specifically interacts with transmembrane segments of nascent integral membrane proteins during membrane integration.

It is found in the cell inner membrane. Its function is as follows. Required for the insertion and/or proper folding and/or complex formation of integral membrane proteins into the membrane. Involved in integration of membrane proteins that insert both dependently and independently of the Sec translocase complex, as well as at least some lipoproteins. Aids folding of multispanning membrane proteins. The sequence is that of Membrane protein insertase YidC from Shewanella sp. (strain ANA-3).